The sequence spans 185 residues: HTH-type transcriptional repressor OpcR (185 aa).

Residues 49–73 (LSELSEATGMSKTRMSQVVREMIDA) constitute a DNA-binding region (H-T-H motif).

It belongs to the GbsR family.

With respect to regulation, is not choline-responsive. In terms of biological role, negatively regulates the transcription of the opuC operon. In the absence of GbsR, is also a negative regulator of the opuB operon. Binds to an inverted repeat in the promoter region of the operons. This is HTH-type transcriptional repressor OpcR (opcR) from Bacillus subtilis (strain 168).